The sequence spans 1378 residues: MIPNDAEGAMDSLLKEIDHEMEVTIGTIDAQEDHSKQKEETEATNQQTWKLPLQDIGDETMDMLVKHNTKNNVINPNFNKKDVDTNESPKNNNDKNVVFNDNVQLLELSANMDESVLMSTPTKSDIDISPNKVLINLGDDIANESNEDNKLPLDNKTESEDSDLVSTMLLSKIPITHTENINDFYEKKSTDIRASTSRISSVSSDIEGTPLPTTVQTDQFELLKQAMKQTFEEDNNSNIDISPLKESLLSSELKTKQNLSIEQNEETSVDSIDNSVIHNSEYEVHARSNEREEENENDFENSIEDLEISTHVIEKSPSIEAISTLDPNTDNNKEHFIINNITKDSTFIEVTSDSKIQIDLKDSPENTLHTNEDQKEANTENVASETNIKETDQVIHIPTLTEEEISTITNITNDTETTEEGSKAEEDAKNSDVSNSQNSESINTTITNSLIGIDQNLTNKSSDITNDYEEPPKENELKSSPDVIEKGHSSIEHFDDEKITNSSALGTSNYISIPLDTLQEATPVTDSGKTFELQNQDSDNINSERIQNLNGSTPVEEKFNADDELLKTNQSHITQNKDKSNINEIDNSGTTSIVSDHVVAPILPPLPKIDKIFIDDPFGEEYDISNDSIDLTKSTRPGDYLSIWHIQEEELKQVSPASTTNSQFSNRILSNASSNASAESRISSTAFKFKPRIVSRSRYINPESRVNSFNISEEMILPQLYGALDPMRRSSRMSRTIQNSIKANRQKSEQYAGTRKYSIEIQPNQESRISSRIISNKLEEVSSENDKVETMNNSITMDGSFQLLPSFLDNSFGEQLDLTFSKFAKDVLSLRSSSLAQSEIHDNSINIWGEDNFIGNTSKNNDHNAMLDSKNKLLEVTDDEKSISESINKDIFADGILKSSIFNDITVSRGLNINGLDVDLSDSESVRVSLLTAETDASESGTPIKNTVKDSHVSSPFKVVNISKWKNQDGPESDHEVEEIAEIQIEAEKSSESIADISPIKMKPFVDTVVIEEPSQTALVDAGSLYLKLKGCLNIKLTGIKHHDARYCFEFDNGRNSIQTAWAVIPSDGDIRVNHDFESTVFEVGSKLYVTLKCKYTPPKTEIVEVVEKVLIPKKKLFGKAEYKYEKRFVQRDSKKDEWNNLFARDGSFGRAEVLLDHTFLNSVKYNKRNCTFDMMNEWTRLNDKENIENVFNIPRKPKYKVADLKMEVCYLDRVSNKEVFPVSFDKCEMIIKKYKEQLLISKEGYLMQEGGDVCNNLVRRFFKLQGTDLIGYHEVSNLPVVTINMLKVIDVVSSDDLKEEEGKQRSGNSKRNFTDHVLFGGCIQLVFTDEEVINLYADTSAQEKIEWYSKLKKTVDLNICHQPWVTKLAEAQKLEEC.

3 disordered regions span residues 71 to 95 (NNVI…NNDK), 361 to 441 (KDSP…NSES), and 458 to 480 (TNKS…LKSS). Residues 361 to 378 (KDSPENTLHTNEDQKEAN) are compositionally biased toward basic and acidic residues. Low complexity predominate over residues 406 to 415 (STITNITNDT). The span at 420–430 (EGSKAEEDAKN) shows a compositional bias: basic and acidic residues. Over residues 431–441 (SDVSNSQNSES) the composition is skewed to polar residues. Residues 470–480 (EPPKENELKSS) show a composition bias toward basic and acidic residues. The PH domain maps to 1240-1357 (LISKEGYLMQ…WYSKLKKTVD (118 aa)).

This sequence belongs to the BUD4 family.

The protein localises to the bud neck. In terms of biological role, required for selection of future bud sites. Cooperates with other bud site selection proteins to recognize a spatial landmark during mitosis and they subsequently become a landmark for downstream polarity establishment factors that coordinate budding and cytokinesis. Involved in the septin organization at the bud neck. The chain is Bud site selection protein 4 (BUD4) from Vanderwaltozyma polyspora (strain ATCC 22028 / DSM 70294 / BCRC 21397 / CBS 2163 / NBRC 10782 / NRRL Y-8283 / UCD 57-17) (Kluyveromyces polysporus).